The sequence spans 389 residues: MKIHEYQGKEILRKFGVAVPRGKPVFSVDDAVKAAEELGGPVWVVKAQIHAGGRGKGGGVKVAKSLEQVREYANQILGMQLVTHQTGPEGQKVNRLLIEEGADIKKELYVGLVIDRVSQKIVVMASSEGGMDVEEVAEKTPELIHKIAVDPATGLKDAEADELATKIGVPAASLPQARAILQGLYKAFWETDASLAEINPLILTGDGKVIALDAKFNFDSNALFRHPEIVAYRDLDEEDPAEVEASKFDLAYISLDGNIGCLVNGAGLAMATMDTIKLFGGEPANFLDVGGGATTEKVTEAFKIMLKNPNLTAILVNIFGGIMRCDVIAEGVIAASKAVSLKVPLVVRMKGTNEDLGKKMLAESGLPIIAADSMEEAAQKVVAAASGKA.

The ATP-grasp domain occupies 9-244 (KEILRKFGVA…LDEEDPAEVE (236 aa)). ATP is bound by residues lysine 46, 53–55 (GRG), glutamate 99, alanine 102, and glutamate 107. 2 residues coordinate Mg(2+): asparagine 199 and aspartate 213. Residues asparagine 264 and 321–323 (GIM) contribute to the substrate site.

Belongs to the succinate/malate CoA ligase beta subunit family. In terms of assembly, heterotetramer of two alpha and two beta subunits. Mg(2+) serves as cofactor.

It catalyses the reaction succinate + ATP + CoA = succinyl-CoA + ADP + phosphate. The enzyme catalyses GTP + succinate + CoA = succinyl-CoA + GDP + phosphate. It participates in carbohydrate metabolism; tricarboxylic acid cycle; succinate from succinyl-CoA (ligase route): step 1/1. Succinyl-CoA synthetase functions in the citric acid cycle (TCA), coupling the hydrolysis of succinyl-CoA to the synthesis of either ATP or GTP and thus represents the only step of substrate-level phosphorylation in the TCA. The beta subunit provides nucleotide specificity of the enzyme and binds the substrate succinate, while the binding sites for coenzyme A and phosphate are found in the alpha subunit. The protein is Succinate--CoA ligase [ADP-forming] subunit beta of Paraburkholderia xenovorans (strain LB400).